The following is a 232-amino-acid chain: CD302 antigen (232 aa).

The signal sequence occupies residues Met1 to Ala22. The Extracellular portion of the chain corresponds to Asp23–Arg168. A C-type lectin domain is found at Phe32 to Leu152. A glycan (N-linked (GlcNAc...) asparagine) is linked at Asn109. The cysteines at positions 128 and 143 are disulfide-linked. The helical transmembrane segment at Ile169–Val189 threads the bilayer. At Trp190–Asn232 the chain is on the cytoplasmic side.

Its subcellular location is the membrane. The protein localises to the cell projection. It localises to the filopodium. It is found in the cytoplasm. The protein resides in the cell cortex. Its subcellular location is the microvillus. In terms of biological role, potential multifunctional C-type lectin receptor that may play roles in endocytosis and phagocytosis as well as in cell adhesion and migration. The sequence is that of CD302 antigen from Bos taurus (Bovine).